The chain runs to 284 residues: Two-pore potassium channel 4 (284 aa).

Residues 1–21 (MEEENLLNENLLHPNESSPEE) are disordered. Residues 1-31 (MEEENLLNENLLHPNESSPEETQVTTVSKSK) lie on the Cytoplasmic side of the membrane. A helical membrane pass occupies residues 32 to 52 (WTILVLAMILLLVYLTFGVCT). The segment at residues 70–89 (DAFYFSIVTFSTVGYGDIVP) is an intramembrane region (pore-forming). Residues 93–113 (TTKILTIVLVSTGVVFLDYLL) form a helical membrane-spanning segment. Residues 114–156 (NRVVSHVLSLQENAILDRINKTRNRAIRDHIAEDGKIRLKWKL) lie on the Cytoplasmic side of the membrane. The helical transmembrane segment at 157–177 (CLAFCAVGLCVGSGALFLHVF) threads the bilayer. The pore-forming intramembrane region spans 184 to 203 (DSVYLSVISVTTVGYGDKTF). Residues 211–231 (FAVFWLLLSTIAMATLFLYLA) form a helical membrane-spanning segment. The Cytoplasmic segment spans residues 232-284 (EMRIDRTTVMKLPPSESEFIVFKLRESGRISEDDIKQIVREFENLEEVPSSGS).

It belongs to the two pore domain potassium channel (TC 1.A.1.7) family. In terms of assembly, homodimer. Predominantly expressed in pollen.

It localises to the cell membrane. In terms of biological role, voltage-independent, instantaneously activating, potassium-selective plasma membrane ion channel. Open rectifier. Regulated by cytoplasmic pH and extra-cellular calcium. Has some permeability for Rb(+) and NH(4)(+), but none for Na(+) or Li(+). This chain is Two-pore potassium channel 4 (TPK4), found in Arabidopsis thaliana (Mouse-ear cress).